The following is a 117-amino-acid chain: Ribonuclease P protein component 4 (117 aa).

The Zn(2+) site is built by Cys-64, Cys-67, Cys-93, and Cys-96.

This sequence belongs to the eukaryotic/archaeal RNase P protein component 4 family. Consists of a catalytic RNA component and at least 4-5 protein subunits. Requires Zn(2+) as cofactor.

It localises to the cytoplasm. The catalysed reaction is Endonucleolytic cleavage of RNA, removing 5'-extranucleotides from tRNA precursor.. Functionally, part of ribonuclease P, a protein complex that generates mature tRNA molecules by cleaving their 5'-ends. The protein is Ribonuclease P protein component 4 of Pyrococcus abyssi (strain GE5 / Orsay).